We begin with the raw amino-acid sequence, 480 residues long: Phosphoglucosamine mutase (480 aa).

The segment at 1–41 (MPKHTKKDPREGAPSATGEPQKQAAGRKLFGTDGVRGVANQ) is disordered. Ser-127 acts as the Phosphoserine intermediate in catalysis. The Mg(2+) site is built by Ser-127, Asp-269, Asp-271, and Asp-273. A Phosphoserine modification is found at Ser-127.

Belongs to the phosphohexose mutase family. Mg(2+) is required as a cofactor. In terms of processing, activated by phosphorylation.

The enzyme catalyses alpha-D-glucosamine 1-phosphate = D-glucosamine 6-phosphate. Its function is as follows. Catalyzes the conversion of glucosamine-6-phosphate to glucosamine-1-phosphate. This is Phosphoglucosamine mutase from Sorangium cellulosum (strain So ce56) (Polyangium cellulosum (strain So ce56)).